The following is a 375-amino-acid chain: DNA replication and repair protein RecF (375 aa).

An ATP-binding site is contributed by 30-37 (GENAQGKT).

This sequence belongs to the RecF family.

The protein localises to the cytoplasm. Functionally, the RecF protein is involved in DNA metabolism; it is required for DNA replication and normal SOS inducibility. RecF binds preferentially to single-stranded, linear DNA. It also seems to bind ATP. This Bacillus mycoides (strain KBAB4) (Bacillus weihenstephanensis) protein is DNA replication and repair protein RecF.